The following is a 92-amino-acid chain: Small ribosomal subunit protein uS19 (92 aa).

This sequence belongs to the universal ribosomal protein uS19 family.

Functionally, protein S19 forms a complex with S13 that binds strongly to the 16S ribosomal RNA. The chain is Small ribosomal subunit protein uS19 from Treponema denticola (strain ATCC 35405 / DSM 14222 / CIP 103919 / JCM 8153 / KCTC 15104).